Here is a 1076-residue protein sequence, read N- to C-terminus: Protein EXPORTIN 1B (1076 aa).

Residues 37 to 103 (ADNILRDLKA…KNYISDVIVQ (67 aa)) enclose the Importin N-terminal domain. 11 HEAT repeats span residues 135–171 (AKWKSFIPDLVIAAKTSETICENCMAILKLLSEEVFD), 232–267 (IFESPLLEILLKFFPVPAYRNLTLQCLSEVASLNFG), 282–319 (MNQLQAILPLNLNIPEAYSTGSSEEQAFIQNLALFFTS), 475–514 (DTEKQMLSKLSKQLSGEEWAWNNLNTLCWAIGSISGSMVV), 564–601 (KFLKTVVHKLFEFMHETHPGVQDMACDTFLKIVQKCKR), 613–650 (PFVSELLSGLATIVGDLQPHQIHTFYESVGSMIQAESD), 683–720 (LKEPDVIRTVLNILQTNTRVATSLGTFFLSQISLIFLD), 757–794 (REILKLIETFLDKAENQPHIGKQFVPPMMDQVLGDYAR), 799–836 (ARESEVLSLFATIINKYKVVMRDEVPLIFEAVFQCTLE), 895–935 (ETGL…VLTD), and 943–988 (KLHV…YTTK).

The protein belongs to the exportin family. As to expression, present in mature pollen grains, unpollinated pistils, and 2-week-old seedlings.

It localises to the nucleus. Its subcellular location is the nuclear pore complex. It is found in the nucleus membrane. Functionally, receptor for the leucine-rich nuclear export signal (NES). Binds cooperatively to the NES on its target protein and to the small GTPase Ran in its active GTP-bound form. Required for the maternal-to-embryonic transition and during gametophyte development. The polypeptide is Protein EXPORTIN 1B (Arabidopsis thaliana (Mouse-ear cress)).